We begin with the raw amino-acid sequence, 239 residues long: Mannose-P-dolichol utilization defect 1 protein homolog 1 (239 aa).

6 helical membrane passes run 25–45 (CLLP…SMTV), 62–82 (LSVV…AYCL), 91–111 (FGEL…IYYF), 123–143 (AILY…PFLF), 174–194 (LSFL…FTSI), and 202–222 (MLLG…QILL). Positions 27–93 (LPLISKLLGY…KDLPFSAFGE (67 aa)) constitute a PQ-loop 1 domain. Residues 150 to 205 (KHLIFLSARIPQIWKNFRNKSTGQLSFLTCLMNFGGALARVFTSIQEKAPLSMLLG) form the PQ-loop 2 domain.

This sequence belongs to the MPDU1 (TC 2.A.43.3) family.

The protein localises to the membrane. The polypeptide is Mannose-P-dolichol utilization defect 1 protein homolog 1 (Arabidopsis thaliana (Mouse-ear cress)).